Reading from the N-terminus, the 300-residue chain is MIQIYNRKTKQYDIEQVAGGRLLNTLYTTGRGRLGLKLLVKRKIYSSLTGFFCDSKISRKTIKGFAEKFSIDTNECESKVEEFKSFNEFFARKLKPSARVFDTSEEKLLSPGDGRLQAWENIDTEKLLQIKGMTYSLSELLQDEKLAREYSGGTYLILRLCPVDYHRFHFFDSGKCMETRKIKGEYYSVNPVALSKIPELFCRNKREYSIFKTDNFGDVLFIEVGATSVGSIIQTYIPGERISKGAEKGFFKFGGSTILLIFKKNMVKIDDDIIMQTKEGFETKVLAGEAIGNCIDKRTK.

Active-site charge relay system; for autoendoproteolytic cleavage activity residues include Asp113, His169, and Ser256. Ser256 (schiff-base intermediate with substrate; via pyruvic acid; for decarboxylase activity) is an active-site residue. Ser256 is subject to Pyruvic acid (Ser); by autocatalysis.

This sequence belongs to the phosphatidylserine decarboxylase family. PSD-B subfamily. Prokaryotic type II sub-subfamily. As to quaternary structure, heterodimer of a large membrane-associated beta subunit and a small pyruvoyl-containing alpha subunit. The cofactor is pyruvate. Post-translationally, is synthesized initially as an inactive proenzyme. Formation of the active enzyme involves a self-maturation process in which the active site pyruvoyl group is generated from an internal serine residue via an autocatalytic post-translational modification. Two non-identical subunits are generated from the proenzyme in this reaction, and the pyruvate is formed at the N-terminus of the alpha chain, which is derived from the carboxyl end of the proenzyme. The autoendoproteolytic cleavage occurs by a canonical serine protease mechanism, in which the side chain hydroxyl group of the serine supplies its oxygen atom to form the C-terminus of the beta chain, while the remainder of the serine residue undergoes an oxidative deamination to produce ammonia and the pyruvoyl prosthetic group on the alpha chain. During this reaction, the Ser that is part of the protease active site of the proenzyme becomes the pyruvoyl prosthetic group, which constitutes an essential element of the active site of the mature decarboxylase.

The protein resides in the cell membrane. It catalyses the reaction a 1,2-diacyl-sn-glycero-3-phospho-L-serine + H(+) = a 1,2-diacyl-sn-glycero-3-phosphoethanolamine + CO2. The protein operates within phospholipid metabolism; phosphatidylethanolamine biosynthesis; phosphatidylethanolamine from CDP-diacylglycerol: step 2/2. In terms of biological role, catalyzes the formation of phosphatidylethanolamine (PtdEtn) from phosphatidylserine (PtdSer). This Ruminiclostridium cellulolyticum (strain ATCC 35319 / DSM 5812 / JCM 6584 / H10) (Clostridium cellulolyticum) protein is Phosphatidylserine decarboxylase proenzyme.